The primary structure comprises 379 residues: MSTVLPEDSVGLVTPQIARFDEPLALACGRSLAAYELIYETYGELNASASNAVLICHALSGHHHAAGYHAATDRKPGWWDSCIGPGKPIDTNRFFVVSLNNLGGCNGSTGPSSVNPATGKPYGADFPVLTVEDWVHSQARLADRLGIQTWAAIVGGSLGGMQALQWTITYPDRVRHCVDIASAPKLSAQNIAFNEVARQAILTDPEFHGGSFQDQGVTPKRGLMLARMVGHITYLSDDSMGEKFGRELKSDKLNYDFHSVEFQVESYLRYQGEEFSGRFDANTYLLMTKALDYYDPAAAHGGDLAATLAHVTADYCIMSFTTDWRFSPARSREIVDALMAARKNVCYLDIDSPYGHDAFLIPTPRYMQGFANYMNRIVI.

The AB hydrolase-1 domain maps to 51–360 (NAVLICHALS…DSPYGHDAFL (310 aa)). Ser-157 functions as the Nucleophile in the catalytic mechanism. A substrate-binding site is contributed by Arg-227. Catalysis depends on residues Asp-323 and His-356. Asp-357 lines the substrate pocket.

Belongs to the AB hydrolase superfamily. MetX family. As to quaternary structure, homodimer.

The protein resides in the cytoplasm. The enzyme catalyses L-homoserine + succinyl-CoA = O-succinyl-L-homoserine + CoA. It participates in amino-acid biosynthesis; L-methionine biosynthesis via de novo pathway; O-succinyl-L-homoserine from L-homoserine: step 1/1. Its function is as follows. Transfers a succinyl group from succinyl-CoA to L-homoserine, forming succinyl-L-homoserine. This Pseudomonas entomophila (strain L48) protein is Homoserine O-succinyltransferase.